The sequence spans 117 residues: Large ribosomal subunit protein bL19 (117 aa).

It belongs to the bacterial ribosomal protein bL19 family.

Its function is as follows. This protein is located at the 30S-50S ribosomal subunit interface and may play a role in the structure and function of the aminoacyl-tRNA binding site. This Shewanella pealeana (strain ATCC 700345 / ANG-SQ1) protein is Large ribosomal subunit protein bL19.